Consider the following 334-residue polypeptide: Retinol dehydrogenase 14 (334 aa).

51–57 (GANSGLG) is an NADP(+) binding site. Position 190 (Ser190) interacts with substrate. The active-site Proton acceptor is Tyr215.

It belongs to the short-chain dehydrogenases/reductases (SDR) family.

The catalysed reaction is all-trans-retinol + NADP(+) = all-trans-retinal + NADPH + H(+). It catalyses the reaction 11-cis-retinol + NADP(+) = 11-cis-retinal + NADPH + H(+). The enzyme catalyses 9-cis-retinol + NADP(+) = 9-cis-retinal + NADPH + H(+). Its function is as follows. Retinol dehydrogenase with a clear preference for NADP. Displays high activity towards 9-cis, 11-cis and all-trans-retinol. Shows a very weak activity towards 13-cis-retinol. Has no activity towards steroids. The polypeptide is Retinol dehydrogenase 14 (Rdh14) (Mus musculus (Mouse)).